The following is a 555-amino-acid chain: Zinc finger and SCAN domain-containing protein 21 (555 aa).

Disordered stretches follow at residues 1-74 (MTKV…SKDK), 102-133 (TIKA…YHDT), 204-243 (LDEP…TQHV), and 263-354 (EEVF…RPAP). 3 repeat units span residues 18-56 (ESMG…QDTL), 57-95 (EPMG…QDTL), and 96-134 (EQLG…HDTP). Positions 18–134 (ESMGPSPIKV…FRQFGYHDTP (117 aa)) are 3 X 39 AA approximate tandem repeats. Lys26 participates in a covalent cross-link: Glycyl lysine isopeptide (Lys-Gly) (interchain with G-Cter in SUMO2). In terms of domain architecture, SCAN box spans 122-204 (RQRFRQFGYH…TLLEDLEQEL (83 aa)). Residues 210–240 (QVSSPPNEQKQSWEKMSTSGTAMESLSSTET) show a composition bias toward polar residues. Residues 280–302 (PQKEDSADEHRSSEEESHADGLK) show a composition bias toward basic and acidic residues. Glycyl lysine isopeptide (Lys-Gly) (interchain with G-Cter in SUMO2) cross-links involve residues Lys302 and Lys313. The segment covering 316-332 (SRSERQWANNLERERGT) has biased composition (basic and acidic residues). 7 consecutive C2H2-type zinc fingers follow at residues 359 to 381 (YICA…RRTH), 387 to 409 (YVCT…YRTH), 415 to 436 (YDCK…QRMH), 442 to 464 (YQCK…YRIH), 470 to 492 (YQCN…QRLH), 498 to 520 (YKCK…HRIH), and 526 to 548 (YWCS…QRVH). Lys431 participates in a covalent cross-link: Glycyl lysine isopeptide (Lys-Gly) (interchain with G-Cter in SUMO2).

The protein belongs to the krueppel C2H2-type zinc-finger protein family. Expressed predominantly in the spermatocytes and spermatids of adult testes. It is also present at lower levels in the ovary, brain, spleen, embryo and fetus.

It localises to the nucleus. Functionally, strong transcriptional activator. Plays an important role in spermatogenesis; essential for the progression of meiotic prophase I in spermatocytes. In Mus musculus (Mouse), this protein is Zinc finger and SCAN domain-containing protein 21 (Zscan21).